The primary structure comprises 548 residues: Glutamyl-tRNA(Gln) amidotransferase subunit B, chloroplastic/mitochondrial (548 aa).

It belongs to the GatB/GatE family. GatB subfamily. As to quaternary structure, subunit of the heterotrimeric GatCAB amidotransferase (AdT) complex, composed of A, B and C subunits.

The protein localises to the mitochondrion. The protein resides in the plastid. It is found in the chloroplast. It carries out the reaction L-glutamyl-tRNA(Gln) + L-glutamine + ATP + H2O = L-glutaminyl-tRNA(Gln) + L-glutamate + ADP + phosphate + H(+). Functionally, allows the formation of correctly charged Gln-tRNA(Gln) through the transamidation of misacylated Glu-tRNA(Gln) in chloroplasts and mitochondria. The reaction takes place in the presence of glutamine and ATP through an activated gamma-phospho-Glu-tRNA(Gln). In Sorghum bicolor (Sorghum), this protein is Glutamyl-tRNA(Gln) amidotransferase subunit B, chloroplastic/mitochondrial.